We begin with the raw amino-acid sequence, 281 residues long: Acetyl-coenzyme A carboxylase carboxyl transferase subunit beta (281 aa).

The 259-residue stretch at isoleucine 23–asparagine 281 folds into the CoA carboxyltransferase N-terminal domain. Residues cysteine 27, cysteine 30, cysteine 46, and cysteine 49 each coordinate Zn(2+). A C4-type zinc finger spans residues cysteine 27–cysteine 49.

The protein belongs to the AccD/PCCB family. Acetyl-CoA carboxylase is a heterohexamer composed of biotin carboxyl carrier protein (AccB), biotin carboxylase (AccC) and two subunits each of ACCase subunit alpha (AccA) and ACCase subunit beta (AccD). Zn(2+) serves as cofactor.

It localises to the cytoplasm. The enzyme catalyses N(6)-carboxybiotinyl-L-lysyl-[protein] + acetyl-CoA = N(6)-biotinyl-L-lysyl-[protein] + malonyl-CoA. The protein operates within lipid metabolism; malonyl-CoA biosynthesis; malonyl-CoA from acetyl-CoA: step 1/1. Functionally, component of the acetyl coenzyme A carboxylase (ACC) complex. Biotin carboxylase (BC) catalyzes the carboxylation of biotin on its carrier protein (BCCP) and then the CO(2) group is transferred by the transcarboxylase to acetyl-CoA to form malonyl-CoA. This chain is Acetyl-coenzyme A carboxylase carboxyl transferase subunit beta, found in Alteromonas mediterranea (strain DSM 17117 / CIP 110805 / LMG 28347 / Deep ecotype).